The sequence spans 236 residues: 3-deoxy-D-manno-octulosonic acid kinase (236 aa).

Residue D166 is part of the active site.

The protein belongs to the protein kinase superfamily. KdkA/RfaP family.

It localises to the cell inner membrane. The catalysed reaction is an alpha-Kdo-(2-&gt;6)-lipid IVA + ATP = a 4-O-phospho-alpha-Kdo-(2-&gt;6)-lipid IVA + ADP + H(+). It functions in the pathway bacterial outer membrane biogenesis; LPS core biosynthesis. Catalyzes the ATP-dependent phosphorylation of the 3-deoxy-D-manno-octulosonic acid (Kdo) residue in Kdo-lipid IV(A) at the 4-OH position. The protein is 3-deoxy-D-manno-octulosonic acid kinase of Photobacterium profundum (strain SS9).